Reading from the N-terminus, the 211-residue chain is tRNA (guanine-N(7)-)-methyltransferase (211 aa).

4 residues coordinate S-adenosyl-L-methionine: Glu-37, Asp-62, Glu-89, and Asp-112. Asp-112 is a catalytic residue. Lys-116 and Asp-148 together coordinate substrate.

The protein belongs to the class I-like SAM-binding methyltransferase superfamily. TrmB family.

The enzyme catalyses guanosine(46) in tRNA + S-adenosyl-L-methionine = N(7)-methylguanosine(46) in tRNA + S-adenosyl-L-homocysteine. Its pathway is tRNA modification; N(7)-methylguanine-tRNA biosynthesis. Its function is as follows. Catalyzes the formation of N(7)-methylguanine at position 46 (m7G46) in tRNA. In Geobacter metallireducens (strain ATCC 53774 / DSM 7210 / GS-15), this protein is tRNA (guanine-N(7)-)-methyltransferase.